Reading from the N-terminus, the 227-residue chain is MMVAHTAQQLDLREKLLTNGVHSLSDIELLAVFISSGNNKKSCLQLAYELTKHLGNLRNILNADLQSFKSIHGLGEVRYAQLQAAKEICHRSDFIDLQKEIQLSNTQQTYAFLKKRLRDYKNETFAALFLDSQHRIIAYEELFSGTINTATVYPRPIVERVLQLNAAALILAHNHPSGLSDASQQDFAITERIRDALDLVDARLLDHIVIGDNEVYSIFAENKWVCN.

Residues 102-225 (QLSNTQQTYA…YSIFAENKWV (124 aa)) form the MPN domain. Zn(2+)-binding residues include H173, H175, and D186. A JAMM motif motif is present at residues 173 to 186 (HNHPSGLSDASQQD).

The protein belongs to the UPF0758 family.

The chain is UPF0758 protein LPC_1989 from Legionella pneumophila (strain Corby).